A 358-amino-acid polypeptide reads, in one-letter code: DnaJ homolog subfamily B member 11 (358 aa).

The N-terminal stretch at 1–22 is a signal peptide; sequence MAPQNLSTFCLLLLYLIGAVIA. Residues 25-90 enclose the J domain; sequence DFYKILGVPR…EKRKQYDTYG (66 aa). The residue at position 188 (Thr188) is a Phosphothreonine. An N-linked (GlcNAc...) asparagine glycan is attached at Asn261.

As to quaternary structure, part of a large chaperone multiprotein complex comprising DNAJB11, HSP90B1, HSPA5, HYOU, PDIA2, PDIA4, PDIA6, PPIB, SDF2L1, UGGT1 and very small amounts of ERP29, but not, or at very low levels, CALR nor CANX. Binds to denatured substrates in an ATP-independent manner. Interacts via the J domain with HSPA5 in an ATP-dependent manner. In terms of processing, contains high-mannose Endo H-sensitive carbohydrates. Cys-169, Cys-171, Cys-193 and Cys-196 form intramolecular disulfide bonds. The preferential partner for each Cys is not known.

It is found in the endoplasmic reticulum lumen. As a co-chaperone for HSPA5 it is required for proper folding, trafficking or degradation of proteins. Binds directly to both unfolded proteins that are substrates for ERAD and nascent unfolded peptide chains, but dissociates from the HSPA5-unfolded protein complex before folding is completed. May help recruiting HSPA5 and other chaperones to the substrate. Stimulates HSPA5 ATPase activity. It is necessary for maturation and correct trafficking of PKD1. The sequence is that of DnaJ homolog subfamily B member 11 (Dnajb11) from Rattus norvegicus (Rat).